The chain runs to 208 residues: Sec-independent protein translocase protein TatB (208 aa).

Residues methionine 1 to glycine 21 form a helical membrane-spanning segment. Positions alanine 178 to alanine 189 are enriched in low complexity. The disordered stretch occupies residues alanine 178–proline 208.

Belongs to the TatB family. In terms of assembly, the Tat system comprises two distinct complexes: a TatABC complex, containing multiple copies of TatA, TatB and TatC subunits, and a separate TatA complex, containing only TatA subunits. Substrates initially bind to the TatABC complex, which probably triggers association of the separate TatA complex to form the active translocon.

It localises to the cell inner membrane. Functionally, part of the twin-arginine translocation (Tat) system that transports large folded proteins containing a characteristic twin-arginine motif in their signal peptide across membranes. Together with TatC, TatB is part of a receptor directly interacting with Tat signal peptides. TatB may form an oligomeric binding site that transiently accommodates folded Tat precursor proteins before their translocation. The protein is Sec-independent protein translocase protein TatB of Xanthomonas euvesicatoria pv. vesicatoria (strain 85-10) (Xanthomonas campestris pv. vesicatoria).